A 703-amino-acid chain; its full sequence is Putative glycosyl hydrolase ecdE (703 aa).

Residues 1–21 (MKLNIFASAILLCTSAFPVAA) form the signal peptide. Asp-47 is a catalytic residue. N-linked (GlcNAc...) asparagine glycosylation is found at Asn-104, Asn-120, Asn-293, Asn-397, Asn-443, and Asn-641.

The protein belongs to the glycosyl hydrolase 32 family.

The protein is Putative glycosyl hydrolase ecdE of Aspergillus rugulosus (Emericella rugulosa).